The sequence spans 194 residues: ATP-dependent Clp protease proteolytic subunit (194 aa).

The active-site Nucleophile is the S98. The active site involves H123.

This sequence belongs to the peptidase S14 family. As to quaternary structure, fourteen ClpP subunits assemble into 2 heptameric rings which stack back to back to give a disk-like structure with a central cavity, resembling the structure of eukaryotic proteasomes.

It is found in the cytoplasm. It catalyses the reaction Hydrolysis of proteins to small peptides in the presence of ATP and magnesium. alpha-casein is the usual test substrate. In the absence of ATP, only oligopeptides shorter than five residues are hydrolyzed (such as succinyl-Leu-Tyr-|-NHMec, and Leu-Tyr-Leu-|-Tyr-Trp, in which cleavage of the -Tyr-|-Leu- and -Tyr-|-Trp bonds also occurs).. Functionally, cleaves peptides in various proteins in a process that requires ATP hydrolysis. Has a chymotrypsin-like activity. Plays a major role in the degradation of misfolded proteins. The polypeptide is ATP-dependent Clp protease proteolytic subunit (Syntrophus aciditrophicus (strain SB)).